Reading from the N-terminus, the 474-residue chain is UDP-glycosyltransferase 71C2 (474 aa).

UDP-alpha-D-glucose-binding positions include serine 293, 352-354, 369-377, and 391-394; these read APQ, HCGWNSILE, and YAEQ.

It belongs to the UDP-glycosyltransferase family.

Its function is as follows. Possesses low quercetin 3-O-glucosyltransferase, 7-O-glucosyltransferase and 3'-O-glucosyltransferase activities in vitro. Glucosylates other secondary metabolites in vitro like vanillin, trans-resveratrol, curumin and etoposide. The protein is UDP-glycosyltransferase 71C2 (UGT71C2) of Arabidopsis thaliana (Mouse-ear cress).